The sequence spans 432 residues: GTPase Obg (432 aa).

One can recognise an Obg domain in the interval 1 to 158 (MFVDQVKIYV…RNIILELKLL (158 aa)). The OBG-type G domain maps to 159-329 (ADVGLVGFPS…LLFAIADLLE (171 aa)). Residues 165 to 172 (GFPSVGKS), 190 to 194 (FTTLV), 212 to 215 (DLPG), 282 to 285 (NKMD), and 310 to 312 (SAA) each bind GTP. Residues Ser172 and Thr192 each contribute to the Mg(2+) site. Positions 350 to 428 (KYEKEEPPFT…LLDYEFEFVD (79 aa)) constitute an OCT domain.

This sequence belongs to the TRAFAC class OBG-HflX-like GTPase superfamily. OBG GTPase family. In terms of assembly, monomer. Mg(2+) is required as a cofactor.

Its subcellular location is the cytoplasm. In terms of biological role, an essential GTPase which binds GTP, GDP and possibly (p)ppGpp with moderate affinity, with high nucleotide exchange rates and a fairly low GTP hydrolysis rate. Plays a role in control of the cell cycle, stress response, ribosome biogenesis and in those bacteria that undergo differentiation, in morphogenesis control. This is GTPase Obg from Geobacillus kaustophilus (strain HTA426).